Consider the following 124-residue polypeptide: Small ribosomal subunit protein eS6 (124 aa).

The protein belongs to the eukaryotic ribosomal protein eS6 family.

This chain is Small ribosomal subunit protein eS6, found in Methanococcus maripaludis (strain C6 / ATCC BAA-1332).